The primary structure comprises 70 residues: Protein SlyX homolog (70 aa).

Belongs to the SlyX family.

This is Protein SlyX homolog from Shewanella loihica (strain ATCC BAA-1088 / PV-4).